A 212-amino-acid polypeptide reads, in one-letter code: Large ribosomal subunit protein uL1 (212 aa).

The protein belongs to the universal ribosomal protein uL1 family. Part of the 50S ribosomal subunit.

Binds directly to 23S rRNA. Probably involved in E site tRNA release. Its function is as follows. Protein L1 is also a translational repressor protein, it controls the translation of its operon by binding to its mRNA. The sequence is that of Large ribosomal subunit protein uL1 from Haloarcula marismortui (strain ATCC 43049 / DSM 3752 / JCM 8966 / VKM B-1809) (Halobacterium marismortui).